Reading from the N-terminus, the 182-residue chain is tRNA-splicing endonuclease (182 aa).

Residues Tyr-119, His-127, and Lys-158 contribute to the active site.

This sequence belongs to the tRNA-intron endonuclease family. Archaeal short subfamily. Homotetramer; although the tetramer contains four active sites, only two participate in the cleavage. Therefore, it should be considered as a dimer of dimers.

It catalyses the reaction pretRNA = a 3'-half-tRNA molecule with a 5'-OH end + a 5'-half-tRNA molecule with a 2',3'-cyclic phosphate end + an intron with a 2',3'-cyclic phosphate and a 5'-hydroxyl terminus.. Functionally, endonuclease that removes tRNA introns. Cleaves pre-tRNA at the 5'- and 3'-splice sites to release the intron. The products are an intron and two tRNA half-molecules bearing 2',3' cyclic phosphate and 5'-OH termini. Recognizes a pseudosymmetric substrate in which 2 bulged loops of 3 bases are separated by a stem of 4 bp. The polypeptide is tRNA-splicing endonuclease (Saccharolobus islandicus (strain M.16.27) (Sulfolobus islandicus)).